A 58-amino-acid polypeptide reads, in one-letter code: Metallothionein (58 aa).

A beta region spans residues 1–29; that stretch reads PDPCCAEGTCECEEGKCKAGCKCTSCRCS. Cys-4, Cys-5, Cys-10, Cys-12, Cys-17, Cys-21, Cys-23, Cys-26, Cys-28, Cys-31, Cys-34, Cys-38, Cys-40, Cys-46, Cys-50, Cys-54, Cys-56, and Cys-57 together coordinate a divalent metal cation. Residues 30 to 58 are alpha; the sequence is PCEKCTSECECKSKEECAKNCTKPCSCCP.

In terms of biological role, metallothioneins have a high content of cysteine residues that bind various heavy metals. Class I MTS in crustacea are involved in the sequestration of elevated levels of heavy-metal ions. The polypeptide is Metallothionein (Potamon potamios).